Reading from the N-terminus, the 156-residue chain is Putative F-box protein R637 (156 aa).

Positions histidine 4–lysine 51 constitute an F-box domain.

The polypeptide is Putative F-box protein R637 (Acanthamoeba polyphaga mimivirus (APMV)).